The sequence spans 449 residues: Sensor histidine protein kinase/phosphatase WalK (449 aa).

Over 1–13 the chain is Extracellular; that stretch reads MLDLLKQTIFTRD. The chain crosses the membrane as a helical span at residues 14-34; the sequence is FIFILILLGFILVVTLLLLEN. Residues 35 to 87 form the HAMP domain; that stretch reads RRDNIQLKQINQKVKDLIAGDYSKVLDMQGGSEITNITNNLNDLSEVIRLTQE. Topologically, residues 35 to 449 are cytoplasmic; that stretch reads RRDNIQLKQI…EEVWEDEVED (415 aa). The PAS domain maps to 92–158; the sequence is ESKRLNSILF…YELRDLITQS (67 aa). The region spanning 157-211 is the PAC domain; that stretch reads QSPELLLDSQDINGEYLNLRVRFALIRRESGFISGLVAVLHDTTEQEKEERERRL. A Histidine kinase domain is found at 215–435; that stretch reads NVSHELRTPL…TFTIVLPYDK (221 aa). The residue at position 218 (His-218) is a Phosphohistidine.

In terms of assembly, may form homodimers. May interact with serine/threonine-protein kinase StkP; the interaction may play a role in regulating Walk signal transduction. In terms of processing, autophosphorylated.

The protein localises to the membrane. The catalysed reaction is ATP + protein L-histidine = ADP + protein N-phospho-L-histidine.. Functionally, member of the two-component regulatory system WalK/WalR that regulates genes involved in cell wall metabolism. Functions as a sensor protein kinase which is autophosphorylated at a histidine residue and transfers its phosphate group to WalR. In turn, WalR binds to the upstream promoter regions of target genes to positively and negatively regulate their expression. Required to maintain expression of WalRK regulon genes in exponentially growing cells, including peptidoglycan hydrolase pcsB. Phosphorylates WalR and also capable of dephosphorylation of WalR. WalK phosphatase activity is probably involved in preventing cross-talk from PnpS and other non-cognate sensor kinases during exponential growth. May be considered a potential virulence factor. The chain is Sensor histidine protein kinase/phosphatase WalK from Streptococcus pneumoniae serotype 2 (strain D39 / NCTC 7466).